Here is a 475-residue protein sequence, read N- to C-terminus: MHFETVIGLEVHVELKTDSKMFSPSPAHFGAEPNSNTNVIDLAYPGVLPVVNRRAVDWAMRASMALNMDIATNSKFDRKNYFYPDNPKAYQISQFDQPIGENGYIDIEVDGETKRIGITRLHMEEDAGKSTHKDGYSLVDLNRQGTPLIEIVSEPDIRSPKEAYAYLEKLRSIIQYTGVSDCKMEEGSLRCDANISLRPYGQKEFGTKTELKNLNSFNYVKKGLEYEEKRQEEELLNGGEIGQETRRFDESTGKTILMRVKEGSDDYRYFPEPDIVPLYVDEDWKARVRETIPELPDERKAKYVNDLGLPEYDAHVLTLTKEMSDFFEGAIDHGADVKLTSNWLMGGVNEYLNKNQVELKDTQLTPENLAGMIKLIEDGTMSSKIAKKVFPELAENGGDAKQIMEDKGLVQISDEATLLKFVTDALDNNPQSIEDYKNGKGKAMGFLVGQIMKASKGQANPQKVNSLLKQELDNR.

The protein belongs to the GatB/GatE family. GatB subfamily. As to quaternary structure, heterotrimer of A, B and C subunits.

The catalysed reaction is L-glutamyl-tRNA(Gln) + L-glutamine + ATP + H2O = L-glutaminyl-tRNA(Gln) + L-glutamate + ADP + phosphate + H(+). The enzyme catalyses L-aspartyl-tRNA(Asn) + L-glutamine + ATP + H2O = L-asparaginyl-tRNA(Asn) + L-glutamate + ADP + phosphate + 2 H(+). Its function is as follows. Allows the formation of correctly charged Asn-tRNA(Asn) or Gln-tRNA(Gln) through the transamidation of misacylated Asp-tRNA(Asn) or Glu-tRNA(Gln) in organisms which lack either or both of asparaginyl-tRNA or glutaminyl-tRNA synthetases. The reaction takes place in the presence of glutamine and ATP through an activated phospho-Asp-tRNA(Asn) or phospho-Glu-tRNA(Gln). This Staphylococcus epidermidis (strain ATCC 12228 / FDA PCI 1200) protein is Aspartyl/glutamyl-tRNA(Asn/Gln) amidotransferase subunit B.